Here is a 144-residue protein sequence, read N- to C-terminus: Large ribosomal subunit protein uL16 (144 aa).

Basic residues predominate over residues 1 to 17 (MLQPKKTKFRRQQKGRA). Residues 1 to 22 (MLQPKKTKFRRQQKGRAKGNAQ) are disordered.

It belongs to the universal ribosomal protein uL16 family. Part of the 50S ribosomal subunit.

Binds 23S rRNA and is also seen to make contacts with the A and possibly P site tRNAs. This chain is Large ribosomal subunit protein uL16, found in Bacteroides fragilis (strain ATCC 25285 / DSM 2151 / CCUG 4856 / JCM 11019 / LMG 10263 / NCTC 9343 / Onslow / VPI 2553 / EN-2).